Reading from the N-terminus, the 266-residue chain is Imidazole glycerol phosphate synthase subunit HisF (266 aa).

Catalysis depends on residues Asp11 and Asp130.

It belongs to the HisA/HisF family. Heterodimer of HisH and HisF.

It localises to the cytoplasm. It catalyses the reaction 5-[(5-phospho-1-deoxy-D-ribulos-1-ylimino)methylamino]-1-(5-phospho-beta-D-ribosyl)imidazole-4-carboxamide + L-glutamine = D-erythro-1-(imidazol-4-yl)glycerol 3-phosphate + 5-amino-1-(5-phospho-beta-D-ribosyl)imidazole-4-carboxamide + L-glutamate + H(+). Its pathway is amino-acid biosynthesis; L-histidine biosynthesis; L-histidine from 5-phospho-alpha-D-ribose 1-diphosphate: step 5/9. Functionally, IGPS catalyzes the conversion of PRFAR and glutamine to IGP, AICAR and glutamate. The HisF subunit catalyzes the cyclization activity that produces IGP and AICAR from PRFAR using the ammonia provided by the HisH subunit. The chain is Imidazole glycerol phosphate synthase subunit HisF from Albidiferax ferrireducens (strain ATCC BAA-621 / DSM 15236 / T118) (Rhodoferax ferrireducens).